The primary structure comprises 421 residues: Exoskeleton protein RP43 (421 aa).

An N-terminal signal peptide occupies residues 1-24; it reads MRVIFVISLVSFMFVTWQTNPVHC. 6 disulfides stabilise this stretch: cysteine 72-cysteine 104, cysteine 132-cysteine 154, cysteine 193-cysteine 219, cysteine 247-cysteine 269, cysteine 309-cysteine 335, and cysteine 362-cysteine 384. 3 consecutive CUB domains span residues 72–191, 193–306, and 309–421; these read CSKP…YSIV, CNSL…YSVP, and CSVV…YTTG.

In terms of tissue distribution, detected in vestimentum and trunk but not in opisthosome or obturaculum. In the vestimentum, expression is restricted to epithelial cells under apical cuticular plaques.

May play a role in protein-protein interactions during tube assembly. The sequence is that of Exoskeleton protein RP43 from Riftia pachyptila (Vent tube worm).